The primary structure comprises 644 residues: MYTSRSLFSTLASCLSLATLVASSPTTNQNLPSSKRDATVEQNVFFDINGKEVETRIAKLKAEGYRPTSLNIHGTPTDAKYAGIWIKQDGNPYETIVGANKTTYDAWLDQWKASGYVSTQVSATGPASNAVFAGVMEKIPSIRNWTQICGTSSPYAYLNATGDAPIVITGVSLYGTPTERQYCVLGHEDTDNHQQTVWFPTSSSQDYKTIEPAETTKRFWRPVFIDSSEDKLLASIFDDTSVGNWTVRTDLTASQLQSEITAQKANNMHPIHISGAGSTETQYVVIFTEQATPLERNWHAVGDITGFPDNARVKRDLDEILQKFMKRNSVRQAQVSASINGTVIASRAYTWAESNRAIVEPSDKFLLGSVSKAFTYAAVDHLVSTGVVNLTDHIYPLLGYTKPADPRSLNITIQHLLDHTGGFDRGMSPDIGFIFTTVAQSLNQSTPATLRQLIEYVLAKPLDFEPGTRSVYSNYGTLLLGYLIANKTGETYMSYLEKNVLKGLDVEMYTTPGADHTNDRIVQETKFTSISALTPLSEKRVANVYGGDGAVKEAAVSSFALKASADTVSRFIGKHAAYGLGPRQLFMYRDGTVAGARALAYSMAKLDWAITLNTREYLDENAWNTLVFTDLYQLWGALDSALPL.

An N-terminal signal peptide occupies residues 1 to 23 (MYTSRSLFSTLASCLSLATLVAS). Residues Asn100, Asn144, Asn159, Asn244, and Asn340 are each glycosylated (N-linked (GlcNAc...) asparagine). Residues Cys149 and Cys183 are joined by a disulfide bond. Ser369 is an active-site residue. Residues Asn389, Asn410, Asn443, and Asn486 are each glycosylated (N-linked (GlcNAc...) asparagine).

It belongs to the peptidase S12 family.

The protein resides in the secreted. It carries out the reaction a glycyl-glycyl-[protein] + H2O = N-terminal glycyl-[protein] + [protein]-C-terminal glycine. Not inhibited by phenylmethylsulfonyl fluoride (PMSF; serine peptidase class S1 inhibitor), clavulanic acid (beta-lactamase inhibitor) or ampicillin (penicillin-binding protein (PBP) inhibitor). Serine-type endopeptidase that cleaves Gly-Gly bonds in the polyglycine linker of host plant class IV chitinases to disrupt their chitin-binding, and thereby plays a role in lowering the defense responses of the host to the fungus. Degrades Z.mays Endochitinase A (CHIA). Has low proteolytic activity on Z.mays Endochitinase B (CHIB). In Cochliobolus carbonum (strain 26-R-13) (Maize leaf spot fungus), this protein is Polyglycine hydrolase.